The primary structure comprises 338 residues: Increasing suppression factor 1 (338 aa).

Residues 50-70 (QNSSKSNNSHHSSSTNAGNTS) are compositionally biased toward low complexity. The segment at 50–75 (QNSSKSNNSHHSSSTNAGNTSRHIGN) is disordered. Residue Ser-119 is modified to Phosphoserine. Residues 267-306 (SLLSNGSSSSPLQTRNNSYSNSLVKSPSNSSLNTSVASSN) show a composition bias toward low complexity. Residues 267–322 (SLLSNGSSSSPLQTRNNSYSNSLVKSPSNSSLNTSVASSNEESSPHTSNCLEERNP) are disordered. The segment covering 307–316 (EESSPHTSNC) has biased composition (polar residues).

This sequence belongs to the ISF1/MBR1 family.

Its function is as follows. Could influence the NAM7/UPF1 function, possibly at the level of mRNA turnover. Participates in mitochondrial biogenesis. The chain is Increasing suppression factor 1 (ISF1) from Saccharomyces cerevisiae (strain ATCC 204508 / S288c) (Baker's yeast).